The following is a 512-amino-acid chain: ADP,ATP carrier protein 4 (512 aa).

12 helical membrane passes run 34-54 (ISKFLFITLLMFCILFIQNLI), 71-91 (ISFLKFWGVMPSAFLITVMYV), 102-122 (IFYLIISIFLIFFALFAYVIF), 157-177 (FSLFYIIAELWPNVVFALLFW), 192-212 (FYPLFGLLSQTGIYLAGHFLE), 231-251 (FHTLSIQIILTIVLILGIVSI), 296-316 (LIATLLICYGIAINLVEGPWK), 330-350 (AAFIGSYLSYTGVFTIFFVLL), 361-381 (FTSAVITPSIVFITGILFFAF), 390-410 (LIIANFILTDPALVAITIGAI), 448-468 (VIGTKLGKSGSAFLQSLIFII), and 476-496 (SISICLMIIFILTCLTWIWAT).

It belongs to the ADP/ATP translocase tlc family.

Its subcellular location is the cell membrane. Its function is as follows. Provides the rickettsial cell with host ATP in exchange for rickettsial ADP. This is an obligate exchange system. This energy acquiring activity is an important component of rickettsial parasitism. This chain is ADP,ATP carrier protein 4 (tlcD), found in Rickettsia typhi (strain ATCC VR-144 / Wilmington).